Here is a 262-residue protein sequence, read N- to C-terminus: Merozoite surface protein 2 (262 aa).

The N-terminal stretch at 1–20 is a signal peptide; sequence MKVIKTLSIINFFIFVTFNI. N-linked (GlcNAc...) asparagine glycans are attached at residues N22 and N36. The interval 44 to 188 is polymorphic region; the sequence is AESKPPTGTG…EQTESPELQS (145 aa). The tract at residues 44–223 is disordered; it reads AESKPPTGTG…DSQKECTDGN (180 aa). Over residues 51–66 the composition is skewed to gly residues; sequence GTGGSGSAGSGAGASA. The segment covering 67–111 has biased composition (low complexity); sequence GNGANPGADAERSPSTPATPATPATTTTTTTTNDAEASTSTSSEN. Over residues 112 to 127 the composition is skewed to basic and acidic residues; sequence PNHKNAETNPKGKGEV. 2 stretches are compositionally biased toward polar residues: residues 129–155 and 162–190; these read KPNQANKETQNNSNVQQDSQTKSNVPP and KSPTAQPEQAENSAPTAEQTESPELQSAP. N139 carries an N-linked (GlcNAc...) asparagine glycan. Residue N211 is glycosylated (N-linked (GlcNAc...) asparagine). C219 and C227 are disulfide-bonded. N-linked (GlcNAc...) asparagine glycosylation is found at N235 and N236. Residue N236 is the site of GPI-anchor amidated asparagine attachment. Positions 237-262 are cleaved as a propeptide — removed in mature form; that stretch reads SSNIASINKFVVLISATLVLSFAIFI.

The protein resides in the cell membrane. May play a role in the merozoite attachment to the erythrocyte. The sequence is that of Merozoite surface protein 2 from Plasmodium falciparum (isolate Camp / Malaysia).